The following is a 344-amino-acid chain: N-acetyl-gamma-glutamyl-phosphate reductase (344 aa).

Cys-150 is a catalytic residue.

Belongs to the NAGSA dehydrogenase family. Type 1 subfamily.

It is found in the cytoplasm. The catalysed reaction is N-acetyl-L-glutamate 5-semialdehyde + phosphate + NADP(+) = N-acetyl-L-glutamyl 5-phosphate + NADPH + H(+). Its pathway is amino-acid biosynthesis; L-arginine biosynthesis; N(2)-acetyl-L-ornithine from L-glutamate: step 3/4. In terms of biological role, catalyzes the NADPH-dependent reduction of N-acetyl-5-glutamyl phosphate to yield N-acetyl-L-glutamate 5-semialdehyde. This chain is N-acetyl-gamma-glutamyl-phosphate reductase, found in Pseudomonas aeruginosa (strain UCBPP-PA14).